A 171-amino-acid polypeptide reads, in one-letter code: Peptidyl-prolyl cis-trans isomerase (171 aa).

The PPIase cyclophilin-type domain maps to 7 to 170 (FFDLTIGGAP…KPVVIADCGQ (164 aa)).

This sequence belongs to the cyclophilin-type PPIase family. As to expression, expressed in leaves, floral buds, growing shoots and stamens at anthesis.

The protein resides in the cytoplasm. It carries out the reaction [protein]-peptidylproline (omega=180) = [protein]-peptidylproline (omega=0). Its activity is regulated as follows. Binds cyclosporin A (CsA). CsA mediates some of its effects via an inhibitory action on PPIase. PPIases accelerate the folding of proteins. It catalyzes the cis-trans isomerization of proline imidic peptide bonds in oligopeptides. The chain is Peptidyl-prolyl cis-trans isomerase from Solanum lycopersicum (Tomato).